We begin with the raw amino-acid sequence, 310 residues long: Carbamate kinase (310 aa).

This sequence belongs to the carbamate kinase family. Homodimer.

It localises to the cytoplasm. The enzyme catalyses hydrogencarbonate + NH4(+) + ATP = carbamoyl phosphate + ADP + H2O + H(+). It functions in the pathway amino-acid degradation; L-arginine degradation via ADI pathway. This Haemophilus influenzae (strain ATCC 51907 / DSM 11121 / KW20 / Rd) protein is Carbamate kinase.